A 341-amino-acid chain; its full sequence is THO complex subunit 6 (341 aa).

WD repeat units lie at residues 22–61, 74–112, 124–165, 166–205, 215–254, 256–293, and 295–339; these read RLHMTIFSQSVSPCGKFLAAGNNYGQIAIFSLSSALSSEA, AHDGPVYSMVSTDRHLLSAGDGEVKAWLWAEMLKKGCKE, LEVP…RVLR, GHTDYIHCLALRERSPEVLSGGEDGAVRLWDLRTAKEVQT, SRPHNGRWIGCLATDSDWMVCGGGPALTLWHLRSSTPTTI, PIRAPQKHVTFYQDLILSAGQGRCVNQWQLSGELKAQV, and GSSP…AFSL. Phosphoserine is present on Ser180.

Belongs to the WD repeat THOC6 family. In terms of assembly, component of the THO subcomplex, which is composed of THOC1, THOC2, THOC3, THOC5, THOC6 and THOC7. The THO subcomplex interacts with DDX39B to form the THO-DDX39B complex which multimerizes into a 28-subunit tetrameric assembly. Component of the transcription/export (TREX) complex at least composed of ALYREF/THOC4, DDX39B, SARNP/CIP29, CHTOP and the THO subcomplex; in the complex interacts with THOC5; together with THOC5 and THOC7, plays a key structural role in the oligomerization of the THO-DDX39B complex. TREX seems to have a dynamic structure involving ATP-dependent remodeling.

The protein resides in the nucleus. The protein localises to the nucleus speckle. In terms of biological role, component of the THO subcomplex of the TREX complex which is thought to couple mRNA transcription, processing and nuclear export, and which specifically associates with spliced mRNA and not with unspliced pre-mRNA. Plays a key structural role in the oligomerization of the THO-DDX39B complex. TREX is recruited to spliced mRNAs by a transcription-independent mechanism, binds to mRNA upstream of the exon-junction complex (EJC) and is recruited in a splicing- and cap-dependent manner to a region near the 5' end of the mRNA where it functions in mRNA export to the cytoplasm via the TAP/NXF1 pathway. Plays a role in apoptosis negative control involved in brain development. Its function is as follows. (Microbial infection) The TREX complex is essential for the export of Kaposi's sarcoma-associated herpesvirus (KSHV) intronless mRNAs and infectious virus production. This is THO complex subunit 6 (THOC6) from Homo sapiens (Human).